The sequence spans 534 residues: MGHQESPLARAPAGGAAYVKRLCKGLSWREHVESHGSLGAQASPASAAAAEGSATRRARAATSRAARSRRQPGPGADHPQAGAPGGKRAARKWRCAGQVTIQGPAPPRPRAGRRDEAGGARAAPLLLPPPPAAMETGKDGARRGTQSPERKRRSPVPRAPSTKLRPAAAARAMDPVAAEAPGEAFLARRRPEGGGGSARPRYSLLAEIGRGSYGVVYEAVAGRSGARVAVKKIRCDAPENVELALAEFWALTSLKRRHQNVVQFEECVLQRNGLAQRMSHGNKSSQLYLRLVETSLKGERILGYAEEPCYLWFVMEFCEGGDLNQYVLSRRPDPATNKSFMLQLTSAIAFLHKNHIVHRDLKPDNILITERSGTPILKVADFGLSKVCAGLAPRGKEGNQDNKNVNVNKYWLSSACGSDFYMAPEVWEGHYTAKADIFALGIIIWAMIERITFIDSETKKELLGTYIKQGTEIVPVGEALLENPKMELHIPQKRRTSMSEGIKQLLKDMLAANPQDRPDAFELETRMDQVTCAA.

A disordered region spans residues 32–176 (VESHGSLGAQ…AAAARAMDPV (145 aa)). Low complexity-rich tracts occupy residues 39 to 65 (GAQA…TSRA) and 166 to 176 (PAAAARAMDPV). The Protein kinase domain maps to 202 to 530 (YSLLAEIGRG…FELETRMDQV (329 aa)). Residues 208-216 (IGRGSYGVV) and Lys-231 each bind ATP. The active-site Proton acceptor is the Asp-360.

Belongs to the protein kinase superfamily. Ser/Thr protein kinase family. Interacts with PDLIM1/CLP-36. Post-translationally, autophosphorylated. In terms of tissue distribution, expressed in testis.

It is found in the nucleus. It localises to the nucleolus. Its subcellular location is the cytoplasm. The catalysed reaction is L-seryl-[protein] + ATP = O-phospho-L-seryl-[protein] + ADP + H(+). It carries out the reaction L-threonyl-[protein] + ATP = O-phospho-L-threonyl-[protein] + ADP + H(+). This Homo sapiens (Human) protein is Serine/threonine-protein kinase 35 (STK35).